The chain runs to 63 residues: Toxin Cn11 (63 aa).

Residues R2–C63 enclose the LCN-type CS-alpha/beta domain. 4 cysteine pairs are disulfide-bonded: C12/C63, C16/C37, C23/C44, and C27/C46.

This sequence belongs to the long (4 C-C) scorpion toxin superfamily. Sodium channel inhibitor family. Expressed by the venom gland.

It localises to the secreted. First blocker of sodium channels (Nav) found in scorpions. Is lethal to crustaceans (Cambarellus montezumae), less toxic to insects (crickets) and non-toxic to mammals (mice) at the doses assayed. This chain is Toxin Cn11, found in Centruroides noxius (Mexican scorpion).